We begin with the raw amino-acid sequence, 885 residues long: Alanine--tRNA ligase (885 aa).

The Zn(2+) site is built by histidine 564, histidine 568, cysteine 676, and histidine 680.

It belongs to the class-II aminoacyl-tRNA synthetase family. Zn(2+) is required as a cofactor.

It localises to the cytoplasm. It carries out the reaction tRNA(Ala) + L-alanine + ATP = L-alanyl-tRNA(Ala) + AMP + diphosphate. Functionally, catalyzes the attachment of alanine to tRNA(Ala) in a two-step reaction: alanine is first activated by ATP to form Ala-AMP and then transferred to the acceptor end of tRNA(Ala). Also edits incorrectly charged Ser-tRNA(Ala) and Gly-tRNA(Ala) via its editing domain. The chain is Alanine--tRNA ligase from Brucella ovis (strain ATCC 25840 / 63/290 / NCTC 10512).